The sequence spans 457 residues: Phosphoglucosamine mutase (457 aa).

The active-site Phosphoserine intermediate is the serine 105. The Mg(2+) site is built by serine 105, aspartate 247, aspartate 249, and aspartate 251. Serine 105 is modified (phosphoserine).

This sequence belongs to the phosphohexose mutase family. It depends on Mg(2+) as a cofactor. Post-translationally, activated by phosphorylation.

It catalyses the reaction alpha-D-glucosamine 1-phosphate = D-glucosamine 6-phosphate. In terms of biological role, catalyzes the conversion of glucosamine-6-phosphate to glucosamine-1-phosphate. The polypeptide is Phosphoglucosamine mutase (Protochlamydia amoebophila (strain UWE25)).